Consider the following 362-residue polypeptide: MRDETPERAAPLRFGYTTGSCATATSLAAARLLVAGHADDAVEIVLPKGQRVMMRLEFCRITADGAEAGTIKDAGDDPDVTHGALVFARVALSAAPGVRFHAGPGVGTVTRAGLTLPVGEPAINPVPRQMMTTHLDALAAEYGYAGGFDVTIGVEGGEALALKTMNPRLGIVGGLSILGTTGIVRPFSCSAYIASIHQGIDVARANGIAHIAACTGNTSEDAMRAHYGLPDMALIEMGDFAGAVLKHLRRAPVSRLSMCGGFGKLSKLAAGHLDLHSRHSSIDLPLLAQWAAEAGANDALQAAMRAANTSQEALKLALADGVPLGDLVCAHALRVARDIVPASVAVEMFAIDRQGRFVGSAR.

This sequence belongs to the CbiD family.

The catalysed reaction is Co-precorrin-5B + S-adenosyl-L-methionine = Co-precorrin-6A + S-adenosyl-L-homocysteine. The protein operates within cofactor biosynthesis; adenosylcobalamin biosynthesis; cob(II)yrinate a,c-diamide from sirohydrochlorin (anaerobic route): step 6/10. Functionally, catalyzes the methylation of C-1 in cobalt-precorrin-5B to form cobalt-precorrin-6A. The chain is Cobalt-precorrin-5B C(1)-methyltransferase from Burkholderia ambifaria (strain MC40-6).